Consider the following 377-residue polypeptide: MLISARRLRRCQFFQLLTSCFVLSLMALLVQEDNSLINHVKSYSYRYLINSYDFVNDSLSVPRDRPDGAPSYRYLINNRDKCQNEDVLLLLFVKTSPENRRRRNAIRKTWGNEDYIRSQYAANIKVVFALGIEADPVKSHQTQKDLVIENKRFNDLIQQDFKDTFHNLTLKLLLQFGWVNSYCPSAKFIMSADDDIFVHTPNLVSYLKSLPIETQDFWIGRVHRGSPPIRSKTSKYYVPYEMYPWSSYPDYTAGAAYVVSKDVAAKVYEASQTLNTSLYIDDVFMGICANKMGVVPQYHVYFAGEGKAPYHPCIYNKMITSHGHLDDLDYLWRQATDPNVKSLSAGVLGGAYCKLVNIMLLCKLSYVDTYPCSAAWS.

Topologically, residues 1–12 (MLISARRLRRCQ) are cytoplasmic. The chain crosses the membrane as a helical; Signal-anchor for type II membrane protein span at residues 13–30 (FFQLLTSCFVLSLMALLV). At 31–377 (QEDNSLINHV…DTYPCSAAWS (347 aa)) the chain is on the lumenal side. 3 N-linked (GlcNAc...) asparagine glycosylation sites follow: Asn-56, Asn-167, and Asn-275.

This sequence belongs to the glycosyltransferase 31 family.

It localises to the golgi apparatus membrane. It carries out the reaction a beta-D-Gal-(1-&gt;4)-beta-D-Glc-(1&lt;-&gt;1)-Cer(d18:1(4E)) + UDP-N-acetyl-alpha-D-glucosamine = a beta-D-GlcNAc-(1-&gt;3)-beta-D-Gal-(1-&gt;4)-beta-D-Glc-(1&lt;-&gt;1)-Cer(d18:1(4E)) + UDP + H(+). It catalyses the reaction a neolactoside nLc4Cer(d18:1(4E)) + UDP-N-acetyl-alpha-D-glucosamine = a neolactoside IV(3)-beta-GlcNAc-nLc4Cer(d18:1(4E)) + UDP + H(+). The protein operates within protein modification; protein glycosylation. Beta-1,3-N-acetylglucosaminyltransferase that plays a key role in the synthesis of lacto- or neolacto-series carbohydrate chains on glycolipids. In Xenopus tropicalis (Western clawed frog), this protein is Lactosylceramide 1,3-N-acetyl-beta-D-glucosaminyltransferase (b3gnt5).